The primary structure comprises 525 residues: Sensory neuron membrane protein 1 (525 aa).

At 1-11 the chain is on the cytoplasmic side; the sequence is MLLPKELKYAA. Residues 12–32 traverse the membrane as a helical segment; that stretch reads IAGGVAVFGLIFGWVLFPVIL. At 33–456 the chain is on the extracellular side; that stretch reads KGQLKKEMAL…LKHQLFIPKR (424 aa). N-linked (GlcNAc...) asparagine glycosylation is found at Asn67, Asn229, and Asn324. Cystine bridges form between Cys268–Cys333, Cys297–Cys352, and Cys335–Cys341. Asn440 carries an N-linked (GlcNAc...) asparagine glycan. Residues 457–477 form a helical membrane-spanning segment; sequence VVGVLRWWMVSFGSLGADIGI. Topologically, residues 478-525 are cytoplasmic; that stretch reads VYHFRDHIMRLAVSGDTKVSKVTPEEDPEQKDISVIGPPAQEPAKINI. Residues 497-525 form a disordered region; that stretch reads SKVTPEEDPEQKDISVIGPPAQEPAKINI.

It belongs to the CD36 family.

Its subcellular location is the cell membrane. Its function is as follows. Plays an olfactory role that is not restricted to pheromone sensitivity. The polypeptide is Sensory neuron membrane protein 1 (Mamestra brassicae (Cabbage moth)).